Consider the following 569-residue polypeptide: Membrane protein insertase YidC (569 aa).

Residues 6–26 form a helical membrane-spanning segment; sequence FVLFLIFATSLLFLWDAWQKE. Polar residues-rich tracts occupy residues 32 to 52 and 62 to 74; these read QGPK…TAGT and LASS…STAE. A disordered region spans residues 32-81; that stretch reads QGPKTAVQGTETQANTGTAGTAETPVPGDQLASSVPQRGSTAENGAPVRA. 5 helical membrane-spanning segments follow: residues 348–368, 375–395, 442–462, 479–499, and 519–539; these read VVDY…LSLF, WGVA…PLSA, GGCL…WVLL, LSAP…MFLQ, and PLAF…YSLV.

This sequence belongs to the OXA1/ALB3/YidC family. Type 1 subfamily. In terms of assembly, interacts with the Sec translocase complex via SecD. Specifically interacts with transmembrane segments of nascent integral membrane proteins during membrane integration.

It localises to the cell inner membrane. Required for the insertion and/or proper folding and/or complex formation of integral membrane proteins into the membrane. Involved in integration of membrane proteins that insert both dependently and independently of the Sec translocase complex, as well as at least some lipoproteins. Aids folding of multispanning membrane proteins. The chain is Membrane protein insertase YidC from Nitrosospira multiformis (strain ATCC 25196 / NCIMB 11849 / C 71).